The following is a 564-amino-acid chain: Formate--tetrahydrofolate ligase (564 aa).

An ATP-binding site is contributed by 69–76; that stretch reads TPAGEGKS.

This sequence belongs to the formate--tetrahydrofolate ligase family.

The enzyme catalyses (6S)-5,6,7,8-tetrahydrofolate + formate + ATP = (6R)-10-formyltetrahydrofolate + ADP + phosphate. Its pathway is one-carbon metabolism; tetrahydrofolate interconversion. The chain is Formate--tetrahydrofolate ligase from Renibacterium salmoninarum (strain ATCC 33209 / DSM 20767 / JCM 11484 / NBRC 15589 / NCIMB 2235).